We begin with the raw amino-acid sequence, 544 residues long: MTTPAGSGTGFGSVSWWGLSPAVDLQAESPPVDPDSQAETEHETPELNVLLLGSVDGRHLLRTLARAALWPRRRFHFYVLENNLEAVARHILIFSLALEDPEKMGLQERSETFLEVWGNALLRPPVAAFVRAQAGRLAHLVPEPDRLAEQLPWLSLGALKFRERDALEAVFRFWAGGEKGPEAFPMSRLWDSRLRQYLGSRYDARHGVSDWDLHMKLHDRGARVIHTREFRRWRDTGVAFELRDSSAYHVPNRTLASGRLLSHRGERVAARGYWGDIATGPFVAFGIEADDETLLRTSNGQPVKTACEITEHNVAELFREMAAWGHPRAAEGDPEQVQGGAEGSSEPAAPAPEPFTVHFLSLDSAHTLHHKSCYMGQFQLLYVACGMVHLLSAELGACVAPGGRLIVELAQFLVDLRQEQLQAFSSRVGELAQAAGFAPQLGGKPSDTFARFYKAGDSAPGHEDPAVESGTPPPEVLAPPLEATDPPSEDRTQPLESGNPPSEPLKLTSESQASLLEASVPPTGSQAPKSENQTVPPETKYPIP.

Disordered stretches follow at residues 328–350 (RAAEGDPEQVQGGAEGSSEPAAP) and 448–544 (TFAR…YPIP). Residues 522–536 (PTGSQAPKSENQTVP) are compositionally biased toward polar residues.

The protein belongs to the DNAAF3 family.

The protein localises to the cytoplasm. Its subcellular location is the dynein axonemal particle. Functionally, required for the assembly of axonemal inner and outer dynein arms. Involved in preassembly of dyneins into complexes before their transport into cilia. This is Dynein axonemal assembly factor 3 (DNAAF3) from Bos taurus (Bovine).